Here is a 431-residue protein sequence, read N- to C-terminus: MGPVIGMTPDKRAETPGAEKIAGLSQIYKMGSLPEAVDAARPKATLVDSESADDELTNLNWLHESTNLLTNFSLGSEGLPIVSPLYDIEGDDVPSFGPACYQNPEKKSATSKPPYSFSLLIYMAIEHSPNKCLPVKEIYSWILDHFPYFATAPTGWKNSVRHNLSLNKCFQKVERSHGKVNGKGSLWCVDPEYKPNLIQALKKQPFSSASSQNGSLSPHYLSSVIKQNQVRNLKESDIDAAAAMMLLNTSIEQGILECEKPLPLKTALQKKRSYGNAFHHPSAVRLQESDSLATSIDPKEDHNYSASSMAAQRCASRSSVSSLSSVDEVYEFIPKNSHVGSDGSEGFHSEEDTDVDYEDDPLGDSGYASQPCAKISEKGQSGKKMRKQTCQEIDEELKEAAGSLLHLAGIRTCLGSLISTAKTQNQKQRKK.

Residues 112–208 (KPPYSFSLLI…QALKKQPFSS (97 aa)) constitute a DNA-binding region (fork-head). Positions 364 to 387 (DSGYASQPCAKISEKGQSGKKMRK) are disordered.

It is found in the nucleus. In terms of biological role, binds to the purine-rich region in HTLV-I LTR. The polypeptide is Forkhead box protein N2 (FOXN2) (Homo sapiens (Human)).